Reading from the N-terminus, the 394-residue chain is Acetate kinase (394 aa).

Asparagine 10 contacts Mg(2+). Lysine 17 serves as a coordination point for ATP. Substrate is bound at residue arginine 87. The active-site Proton donor/acceptor is aspartate 144. ATP is bound by residues 204–208, 279–281, and 327–331; these read HLGNG, DMR, and GIGEN. Glutamate 381 contributes to the Mg(2+) binding site.

The protein belongs to the acetokinase family. As to quaternary structure, homodimer. Mg(2+) is required as a cofactor. It depends on Mn(2+) as a cofactor.

The protein localises to the cytoplasm. The catalysed reaction is acetate + ATP = acetyl phosphate + ADP. It participates in metabolic intermediate biosynthesis; acetyl-CoA biosynthesis; acetyl-CoA from acetate: step 1/2. In terms of biological role, catalyzes the formation of acetyl phosphate from acetate and ATP. Can also catalyze the reverse reaction. This chain is Acetate kinase, found in Pseudomonas aeruginosa (strain LESB58).